Reading from the N-terminus, the 534-residue chain is Cysteine/serine-rich nuclear protein 2 (534 aa).

The residue at position 1 (Met1) is an N-acetylmethionine. Disordered regions lie at residues 1-52 (MDAF…FTPT) and 480-534 (DCGL…PLAV). The segment covering 31-40 (SSDSADSCDS) has biased composition (low complexity). Residues 42–52 (NPPTTASFTPT) show a composition bias toward polar residues. Basic and acidic residues predominate over residues 480–492 (DCGLKEPESEDLH).

This sequence belongs to the AXUD1 family. In terms of tissue distribution, highest expression detected in thymus, brain and ovary. Low levels detected in naive T-cells.

It localises to the nucleus. In terms of biological role, binds to the consensus sequence 5'-AGAGTG-3' and has transcriptional activator activity. May play a role in apoptosis. The protein is Cysteine/serine-rich nuclear protein 2 (Csrnp2) of Mus musculus (Mouse).